The chain runs to 117 residues: Protein Wnt-10b (117 aa).

A lipid anchor (O-palmitoleoyl serine; by PORCN) is attached at S1. C83 and C98 are disulfide-bonded. N-linked (GlcNAc...) asparagine glycosylation occurs at N84.

This sequence belongs to the Wnt family. Post-translationally, palmitoleoylation is required for efficient binding to frizzled receptors. Depalmitoleoylation leads to Wnt signaling pathway inhibition.

The protein localises to the secreted. It localises to the extracellular space. It is found in the extracellular matrix. Its function is as follows. Member of the Wnt ligand gene family that encodes for secreted proteins, which activate the Wnt signaling cascade. Involved in neurogenesis. Performs a partially redundant function with wnt1 in the formation of the midbrain-hindbrain boundary (MHB) organizer. The chain is Protein Wnt-10b (WNT-10B) from Plethodon jordani (Red-cheeked salamander).